Reading from the N-terminus, the 65-residue chain is Beta-toxin Tf4a (65 aa).

The 62-residue stretch at 2 to 63 folds into the LCN-type CS-alpha/beta domain; that stretch reads KEGYPADSKG…VWDSATNKCG (62 aa). 4 disulfides stabilise this stretch: C12-C62, C16-C38, C24-C43, and C28-C45. C62 bears the Cysteine amide mark.

Belongs to the long (4 C-C) scorpion toxin superfamily. Sodium channel inhibitor family. Alpha subfamily. As to expression, expressed by the venom gland.

It is found in the secreted. Its function is as follows. Alpha toxins bind voltage-independently at site-3 of sodium channels (Nav) and inhibit the inactivation of the activated channels, thereby blocking neuronal transmission. This toxin is toxic to frogs but non-toxic to insect larvae (T.molitor), mammals (rats) and crustaceans (crabs) at the doses assayed. This is Beta-toxin Tf4a from Tityus fasciolatus (Central Brazilian scorpion).